A 406-amino-acid polypeptide reads, in one-letter code: O-glycosyltransferase PaGT (406 aa).

A disordered region spans residues 1–26; it reads MSPPSQIKPPQGTTPVPPSELDPRSD.

It belongs to the afumC glycosyltransferase family.

Its pathway is mycotoxin biosynthesis. In terms of biological role, O-glycosyltransferase; part of the 2 gene clusters that mediate the biosynthesis of fusicoccins, diterpene glucosides that display phytohormone-like activity and function as potent activators of plasma membrane H(+)-ATPases in plants by modifying 14-3-3 proteins and cause the plant disease constriction canker. The first step in the pathway is performed by the fusicoccadiene synthase PaFS that possesses both prenyl transferase and terpene cyclase activity, converting isopentenyl diphosphate and dimethylallyl diphosphate into geranylgeranyl diphosphate (GGDP) and successively converting GGDP into fusicocca-2,10(14)-diene, a precursor for fusicoccin H. The second step is the oxidation at the C-8 position by the cytochrome P450 monooxygenase PaP450-2 to yield fusicocca-2,10(14)-diene-8-beta-ol. The cytochrome P450 monooxygenase PaP450-1 then catalyzes the hydroxylation at the C-16 position to produce fusicocca-2,10(14)-diene-8-beta,16-diol. The dioxygenase fc-dox then catalyzes the 16-oxydation of fusicocca-2,10(14)-diene-8-beta,16-diol to yield an aldehyde (8-beta-hydroxyfusicocca-1,10(14)-dien-16-al). The short-chain dehydrogenase/reductase fc-sdr catalyzes the reduction of the aldehyde to yield fusicocca-1,10(14)-diene-8-beta,16-diol. The next step is the hydroxylation at C-9 performed by the cytochrome P450 monooxygenase PaP450-3 that leads to fusicoccin H aglycon which is glycosylated to fusicoccin H by the O-glycosyltransferase PaGT. Hydroxylation at C-12 by the cytochrome P450 monooxygenase PaP450-4 leads then to the production of fusicoccin Q and is followed by methylation by the O-methyltransferase PaMT to yield fusicoccin P. Fusicoccin P is further converted to fusicoccin J via prenylation by the O-glucose prenyltransferase PaPT. Cytochrome P450 monooxygenase PaP450-5 then performs hydroxylation at C-19 to yield dideacetyl-fusicoccin A which is acetylated to 3'-O-deacetyl-fusicoccin A by the O-acetyltransferase PaAT-2. Finally, a another acetylation by the O-acetyltransferase PaAT-1 yields fusicoccin A. The chain is O-glycosyltransferase PaGT from Phomopsis amygdali (Fusicoccum amygdali).